The chain runs to 31 residues: Cyclotide vibi-H (31 aa).

Residues 1–31 (GLLPCAESCVYIPCLTTVIGCSCKSKVCYKN) constitute a cross-link (cyclopeptide (Gly-Asn)). 3 cysteine pairs are disulfide-bonded: Cys-5–Cys-21, Cys-9–Cys-23, and Cys-14–Cys-28.

Post-translationally, this is a cyclic peptide.

In terms of biological role, probably participates in a plant defense mechanism. Has cytotoxic activity, active against a human lymphoma cell line with an IC(50) of 1.6 uM. The sequence is that of Cyclotide vibi-H from Viola biflora (Yellow wood violet).